We begin with the raw amino-acid sequence, 1037 residues long: Glycine dehydrogenase (decarboxylating) A, mitochondrial (1037 aa).

A mitochondrion-targeting transit peptide spans 1–66 (MERARRLANK…LNGFGSQVRT (66 aa)). Lysine 773 is modified (N6-(pyridoxal phosphate)lysine).

This sequence belongs to the GcvP family. In terms of assembly, homodimer. The glycine cleavage system is composed of four proteins: P, T, L and H. The cofactor is pyridoxal 5'-phosphate. Expressed in leaves, stems and roots.

Its subcellular location is the mitochondrion. The catalysed reaction is N(6)-[(R)-lipoyl]-L-lysyl-[glycine-cleavage complex H protein] + glycine + H(+) = N(6)-[(R)-S(8)-aminomethyldihydrolipoyl]-L-lysyl-[glycine-cleavage complex H protein] + CO2. Its function is as follows. The glycine cleavage system catalyzes the degradation of glycine. The P protein binds the alpha-amino group of glycine through its pyridoxal phosphate cofactor; CO(2) is released and the remaining methylamine moiety is then transferred to the lipoamide cofactor of the H protein. The protein is Glycine dehydrogenase (decarboxylating) A, mitochondrial (GDCSPA) of Flaveria pringlei.